Reading from the N-terminus, the 544-residue chain is CTP synthase (544 aa).

The interval 1–266 is amidoligase domain; that stretch reads MSTKFIFVTG…DYFVCRRFHL (266 aa). Serine 14 is a CTP binding site. Serine 14 lines the UTP pocket. Residues 15–20 and aspartate 72 each bind ATP; that span reads SLGKGI. Aspartate 72 and glutamate 140 together coordinate Mg(2+). Residues 147–149, 187–192, and lysine 223 each bind CTP; these read DIE and KTKPTQ. UTP is bound by residues 187–192 and lysine 223; that span reads KTKPTQ. Residues 291-542 enclose the Glutamine amidotransferase type-1 domain; it reads TIGMVGKYIE…VAAAHIHQKA (252 aa). An L-glutamine-binding site is contributed by glycine 352. Cysteine 379 (nucleophile; for glutamine hydrolysis) is an active-site residue. Residues 380–383, glutamate 403, and arginine 470 each bind L-glutamine; that span reads LGMQ. Active-site residues include histidine 515 and glutamate 517.

The protein belongs to the CTP synthase family. In terms of assembly, homotetramer.

It carries out the reaction UTP + L-glutamine + ATP + H2O = CTP + L-glutamate + ADP + phosphate + 2 H(+). The catalysed reaction is L-glutamine + H2O = L-glutamate + NH4(+). The enzyme catalyses UTP + NH4(+) + ATP = CTP + ADP + phosphate + 2 H(+). It functions in the pathway pyrimidine metabolism; CTP biosynthesis via de novo pathway; CTP from UDP: step 2/2. With respect to regulation, allosterically activated by GTP, when glutamine is the substrate; GTP has no effect on the reaction when ammonia is the substrate. The allosteric effector GTP functions by stabilizing the protein conformation that binds the tetrahedral intermediate(s) formed during glutamine hydrolysis. Inhibited by the product CTP, via allosteric rather than competitive inhibition. Catalyzes the ATP-dependent amination of UTP to CTP with either L-glutamine or ammonia as the source of nitrogen. Regulates intracellular CTP levels through interactions with the four ribonucleotide triphosphates. This chain is CTP synthase, found in Pseudoalteromonas translucida (strain TAC 125).